A 288-amino-acid polypeptide reads, in one-letter code: MVLPMQNKIVKIGNIEVANDKPFVLFAGLNVLESRDLAMQVCEHFVKVTDKLKIPYVFKSSFDKANRSSIHSYRGPGMEEGLKIFAELKKTFGVKVITDVHEIHQAKPVAEVVDVIQLPAFLARQTDLVEAMARTGAVINVKKPQFLSPGQMGNIVDKFAECGNDKIILCDRGTNFGYDNLVVDTLGFNIMKKVSKGSPVILDATHALQCRDPFGAASGGRRGQVAELSRAGLAVGLAGLFIESHPNPDKALCDGPSALPLSKVEPFLQQMKALDDLVKSFPELNTEN.

This sequence belongs to the KdsA family.

Its subcellular location is the cytoplasm. The enzyme catalyses D-arabinose 5-phosphate + phosphoenolpyruvate + H2O = 3-deoxy-alpha-D-manno-2-octulosonate-8-phosphate + phosphate. It functions in the pathway carbohydrate biosynthesis; 3-deoxy-D-manno-octulosonate biosynthesis; 3-deoxy-D-manno-octulosonate from D-ribulose 5-phosphate: step 2/3. Its pathway is bacterial outer membrane biogenesis; lipopolysaccharide biosynthesis. The sequence is that of 2-dehydro-3-deoxyphosphooctonate aldolase from Bdellovibrio bacteriovorus (strain ATCC 15356 / DSM 50701 / NCIMB 9529 / HD100).